The following is a 143-amino-acid chain: Transcription antitermination protein NusB (143 aa).

The protein belongs to the NusB family.

Functionally, involved in transcription antitermination. Required for transcription of ribosomal RNA (rRNA) genes. Binds specifically to the boxA antiterminator sequence of the ribosomal RNA (rrn) operons. This Mannheimia succiniciproducens (strain KCTC 0769BP / MBEL55E) protein is Transcription antitermination protein NusB.